The chain runs to 66 residues: Beta-mammal toxin Cv3 (66 aa).

Residues 1 to 66 enclose the LCN-type CS-alpha/beta domain; sequence KEGYIVNYYD…VWPLPNKTCN (66 aa). 4 disulfide bridges follow: Cys12–Cys65, Cys16–Cys41, Cys25–Cys46, and Cys29–Cys48.

Expressed by the venom gland.

It localises to the secreted. Functionally, beta toxins bind voltage-independently at site-4 of sodium channels (Nav) and reduces peak current and shifts the voltage of activation toward more negative potentials thereby affecting sodium channel activation and promoting spontaneous and repetitive firing. This toxin is strongly toxic to mice. The chain is Beta-mammal toxin Cv3 from Centruroides villegasi (Scorpion).